The sequence spans 325 residues: DNA-directed RNA polymerase subunit alpha (325 aa).

Residues 1–231 (MQTSLLKPKI…DQLSVFAALE (231 aa)) are alpha N-terminal domain (alpha-NTD). Residues 246–325 (IDPILLRPVD…ENWPPAGLDK (80 aa)) form an alpha C-terminal domain (alpha-CTD) region.

It belongs to the RNA polymerase alpha chain family. In terms of assembly, homodimer. The RNAP catalytic core consists of 2 alpha, 1 beta, 1 beta' and 1 omega subunit. When a sigma factor is associated with the core the holoenzyme is formed, which can initiate transcription.

It catalyses the reaction RNA(n) + a ribonucleoside 5'-triphosphate = RNA(n+1) + diphosphate. Functionally, DNA-dependent RNA polymerase catalyzes the transcription of DNA into RNA using the four ribonucleoside triphosphates as substrates. The chain is DNA-directed RNA polymerase subunit alpha from Burkholderia multivorans (strain ATCC 17616 / 249).